The sequence spans 375 residues: Growth/differentiation factor 8 (375 aa).

The N-terminal stretch at 1–23 (MQKLQLCVYIYLFMLIVAGPVDL) is a signal peptide. Positions 24–266 (NENSEQKENV…VTDTPKRSRR (243 aa)) are excised as a propeptide. N-linked (GlcNAc...) asparagine glycosylation is present at Asn71. 4 disulfide bridges follow: Cys272-Cys282, Cys281-Cys340, Cys309-Cys372, and Cys313-Cys374.

It belongs to the TGF-beta family. Homodimer; disulfide-linked. Interacts with WFIKKN2, leading to inhibit its activity. Interacts with FST3. Post-translationally, synthesized as large precursor molecule that undergoes proteolytic cleavage to generate an N-terminal propeptide and a disulfide linked C-terminal dimer, which is the biologically active molecule. The circulating form consists of a latent complex of the C-terminal dimer and other proteins, including its propeptide, which maintain the C-terminal dimer in a latent, inactive state. Ligand activation requires additional cleavage of the prodomain by a tolloid-like metalloproteinase.

Its subcellular location is the secreted. Functionally, acts specifically as a negative regulator of skeletal muscle growth. In Homo sapiens (Human), this protein is Growth/differentiation factor 8 (MSTN).